The primary structure comprises 546 residues: Chaperonin GroEL (546 aa).

ATP is bound by residues 30–33, lysine 51, 87–91, glycine 415, 479–481, and aspartate 495; these read TLGP, DGTTT, and NAA.

It belongs to the chaperonin (HSP60) family. Forms a cylinder of 14 subunits composed of two heptameric rings stacked back-to-back. Interacts with the co-chaperonin GroES.

The protein resides in the cytoplasm. It carries out the reaction ATP + H2O + a folded polypeptide = ADP + phosphate + an unfolded polypeptide.. Together with its co-chaperonin GroES, plays an essential role in assisting protein folding. The GroEL-GroES system forms a nano-cage that allows encapsulation of the non-native substrate proteins and provides a physical environment optimized to promote and accelerate protein folding. The chain is Chaperonin GroEL from Pseudomonas putida (strain ATCC 700007 / DSM 6899 / JCM 31910 / BCRC 17059 / LMG 24140 / F1).